The sequence spans 464 residues: Pup--protein ligase (464 aa).

A Mg(2+)-binding site is contributed by Glu-14. Arg-58 contributes to the ATP binding site. Tyr-60 is a Mg(2+) binding site. Asp-62 (proton acceptor) is an active-site residue. Residue Glu-68 coordinates Mg(2+). ATP-binding residues include Thr-71 and Trp-430.

Belongs to the Pup ligase/Pup deamidase family. Pup-conjugating enzyme subfamily.

The enzyme catalyses ATP + [prokaryotic ubiquitin-like protein]-L-glutamate + [protein]-L-lysine = ADP + phosphate + N(6)-([prokaryotic ubiquitin-like protein]-gamma-L-glutamyl)-[protein]-L-lysine.. Its pathway is protein degradation; proteasomal Pup-dependent pathway. It participates in protein modification; protein pupylation. Catalyzes the covalent attachment of the prokaryotic ubiquitin-like protein modifier Pup to the proteasomal substrate proteins, thereby targeting them for proteasomal degradation. This tagging system is termed pupylation. The ligation reaction involves the side-chain carboxylate of the C-terminal glutamate of Pup and the side-chain amino group of a substrate lysine. The chain is Pup--protein ligase from Micrococcus luteus (strain ATCC 4698 / DSM 20030 / JCM 1464 / CCM 169 / CCUG 5858 / IAM 1056 / NBRC 3333 / NCIMB 9278 / NCTC 2665 / VKM Ac-2230) (Micrococcus lysodeikticus).